The sequence spans 210 residues: Small ribosomal subunit protein bS6 (210 aa).

Residues 99–210 (PLPTKRNTKS…KDTKEVKEEG (112 aa)) form a disordered region. The segment covering 120–210 (NDTKEVKEAK…KDTKEVKEEG (91 aa)) has biased composition (basic and acidic residues).

This sequence belongs to the bacterial ribosomal protein bS6 family.

Its function is as follows. Binds together with bS18 to 16S ribosomal RNA. This Prochlorococcus marinus (strain SARG / CCMP1375 / SS120) protein is Small ribosomal subunit protein bS6.